A 229-amino-acid polypeptide reads, in one-letter code: MDLLQSLAVFFVLLLPGTEVTGTLKSTLDPSLKIYKKMFEVKRREQLLALKNLAQLNDIHQQYKILDVMLKGLFKVLEDSRTVLIAADVLPDGPLPQDEKLKDAFSHVVENTAFFGDVVLRFPKIVHHYFDHNSNWNLLIRWGISFCNQTGVFDQGPHSPVLSLMAQELGITEKDSDFQNPFTIDRTEFIPSTDPFQKALREEEKRRKKEEKRKEIRKGPRISRSQSEL.

An N-terminal signal peptide occupies residues 1–22; that stretch reads MDLLQSLAVFFVLLLPGTEVTG. An N-linked (GlcNAc...) asparagine glycan is attached at N148. The segment at 191-229 is disordered; it reads PSTDPFQKALREEEKRRKKEEKRKEIRKGPRISRSQSEL. Positions 196 to 218 form a coiled coil; sequence FQKALREEEKRRKKEEKRKEIRK. The Prevents secretion from ER motif lies at 226 to 229; it reads QSEL.

Belongs to the CCDC134 family. In terms of assembly, interacts with TADA2A. Associates with the PCAF complex via TADA2A binding. O-glycosylated, with additional sialic acid modifications.

The protein resides in the endoplasmic reticulum lumen. Its subcellular location is the secreted. It is found in the cytoplasm. The protein localises to the nucleus. Functionally, molecular adapter required to prevent protein hyperglycosylation of HSP90B1: during translation, associates with nascent HSP90B1 and the STT3A catalytic component of the OST-A complex and tethers them to a specialized translocon that forms a microenvironment for HSP90B1 folding. In the CCDC134-containing translocon, STT3A associates with the SRT pseudosubstrate motif of HSP90B1, preventing access to facultative glycosylation sites until folding is completed, preventing hyperglycosylation and subsequent degradation of HSP90B1. In extracellular secreted form, promotes proliferation and activation of CD8(+) T-cells, suggesting a cytokine-like function. May inhibit ERK and JNK signaling activity. May suppress cell migration and invasion activity, via its effects on ERK and JNK signaling. May also localize in the nucleus: enhances stability of the PCAF histone acetyltransferase (HAT) complex member TADA2A and thus promotes PCAF-mediated histone acetyltransferase activity. Has a critical role in the regulation of osteogenesis and bone development. The polypeptide is Coiled-coil domain-containing protein 134 (Ccdc134) (Rattus norvegicus (Rat)).